Consider the following 400-residue polypeptide: Argininosuccinate synthase (400 aa).

8-16 serves as a coordination point for ATP; that stretch reads AYSGGLDTS. Residue Tyr-87 coordinates L-citrulline. Gly-117 serves as a coordination point for ATP. 3 residues coordinate L-aspartate: Thr-119, Asn-123, and Asp-124. Asn-123 is an L-citrulline binding site. Residues Arg-127, Ser-175, Glu-260, and Tyr-272 each coordinate L-citrulline.

Belongs to the argininosuccinate synthase family. Type 1 subfamily. Homotetramer.

It localises to the cytoplasm. The enzyme catalyses L-citrulline + L-aspartate + ATP = 2-(N(omega)-L-arginino)succinate + AMP + diphosphate + H(+). It functions in the pathway amino-acid biosynthesis; L-arginine biosynthesis; L-arginine from L-ornithine and carbamoyl phosphate: step 2/3. The protein is Argininosuccinate synthase of Mycobacterium sp. (strain JLS).